Here is a 781-residue protein sequence, read N- to C-terminus: Matrix non-peptidase homolog 1 (781 aa).

A signal peptide spans 1-27; the sequence is MTPPPASPSKKAKSSWLLIALIAVIIG. N-linked (GlcNAc...) asparagine glycosylation is present at asparagine 54. Low complexity predominate over residues 63-94; the sequence is TSKATVSTTTTQSATTPSTTTTRIEETTTTTS. The tract at residues 63 to 113 is disordered; sequence TSKATVSTTTTQSATTPSTTTTRIEETTTTTSGAFDESVKNSEASTSTIPT. Asparagine 183, asparagine 341, asparagine 375, and asparagine 520 each carry an N-linked (GlcNAc...) asparagine glycan.

The protein is Matrix non-peptidase homolog 1 (mnp-1) of Caenorhabditis elegans.